Reading from the N-terminus, the 65-residue chain is Small ribosomal subunit protein eS27 (65 aa).

The Zn(2+) site is built by C20, C23, C39, and C42. The segment at 20 to 42 (CIDCGNEQIVFSHPATRVRCLVC) adopts a C4-type zinc-finger fold.

This sequence belongs to the eukaryotic ribosomal protein eS27 family. As to quaternary structure, part of the 30S ribosomal subunit. Requires Zn(2+) as cofactor.

The protein is Small ribosomal subunit protein eS27 of Pyrococcus horikoshii (strain ATCC 700860 / DSM 12428 / JCM 9974 / NBRC 100139 / OT-3).